The primary structure comprises 496 residues: L-arabinose isomerase (496 aa).

Mn(2+) contacts are provided by Glu-302, Glu-329, His-346, and His-445.

It belongs to the arabinose isomerase family. Mn(2+) is required as a cofactor.

It carries out the reaction beta-L-arabinopyranose = L-ribulose. The protein operates within carbohydrate degradation; L-arabinose degradation via L-ribulose; D-xylulose 5-phosphate from L-arabinose (bacterial route): step 1/3. Functionally, catalyzes the conversion of L-arabinose to L-ribulose. The sequence is that of L-arabinose isomerase from Thermotoga sp. (strain RQ2).